Here is a 253-residue protein sequence, read N- to C-terminus: DNA repair protein RecO (253 aa).

The protein belongs to the RecO family.

Its function is as follows. Involved in DNA repair and RecF pathway recombination. This Dehalococcoides mccartyi (strain CBDB1) protein is DNA repair protein RecO.